A 424-amino-acid polypeptide reads, in one-letter code: Histidine--tRNA ligase (424 aa).

Belongs to the class-II aminoacyl-tRNA synthetase family. In terms of assembly, homodimer.

It localises to the cytoplasm. It catalyses the reaction tRNA(His) + L-histidine + ATP = L-histidyl-tRNA(His) + AMP + diphosphate + H(+). This is Histidine--tRNA ligase from Salmonella arizonae (strain ATCC BAA-731 / CDC346-86 / RSK2980).